We begin with the raw amino-acid sequence, 280 residues long: Eukaryotic translation initiation factor 3 subunit F-1 (280 aa).

One can recognise an MPN domain in the interval 8–138 (VRVHPVVLFQ…LRAYICIQLG (131 aa)).

It belongs to the eIF-3 subunit F family. In terms of assembly, component of the eukaryotic translation initiation factor 3 (eIF-3) complex. The eIF-3 complex interacts with pix.

The protein localises to the cytoplasm. Component of the eukaryotic translation initiation factor 3 (eIF-3) complex, which is involved in protein synthesis of a specialized repertoire of mRNAs and, together with other initiation factors, stimulates binding of mRNA and methionyl-tRNAi to the 40S ribosome. The eIF-3 complex specifically targets and initiates translation of a subset of mRNAs involved in cell proliferation. The sequence is that of Eukaryotic translation initiation factor 3 subunit F-1 from Drosophila mojavensis (Fruit fly).